The primary structure comprises 98 residues: Prolactin-releasing peptide (98 aa).

A signal peptide spans 1–22 (MKAVGAWLLCLLLLGLALQGAA). 2 disordered regions span residues 52 to 71 (RFGR…PRRV) and 79 to 98 (GGAE…LVQE). Phe-53 is modified (phenylalanine amide). A propeptide spanning residues 58–98 (AAPGDGPRPGPRRVPACFRLEGGAEPSRALPGRLTAQLVQE) is cleaved from the precursor.

In terms of processing, amidation of C-terminus is required for receptor interaction. As to expression, medulla oblongata and hypothalamus.

Its subcellular location is the secreted. Its function is as follows. Stimulates prolactin (PRL) release and regulates the expression of prolactin through its receptor GPR10. May stimulate lactotrophs directly to secrete PRL. The sequence is that of Prolactin-releasing peptide (PRLH) from Bos taurus (Bovine).